Here is a 353-residue protein sequence, read N- to C-terminus: Photosystem II protein D1 (353 aa).

An N-acetylthreonine modification is found at threonine 2. Threonine 2 carries the phosphothreonine modification. 3 helical membrane passes run 29–46, 118–133, and 142–156; these read YIGW…TATS, HFLL…EWEL, and WIAV…AATA. Histidine 118 is a binding site for chlorophyll a. Tyrosine 126 contacts pheophytin a. The [CaMn4O5] cluster site is built by aspartate 170 and glutamate 189. The helical transmembrane segment at 197 to 218 threads the bilayer; sequence FHMLGVAGVFGGSLFSAMHGSL. Histidine 198 contacts chlorophyll a. Residues histidine 215 and 264–265 contribute to the a quinone site; that span reads SF. Histidine 215 serves as a coordination point for Fe cation. A Fe cation-binding site is contributed by histidine 272. The helical transmembrane segment at 274–288 threads the bilayer; that stretch reads FLAAWPVVGIWFTAL. Residues histidine 332, glutamate 333, aspartate 342, and alanine 344 each contribute to the [CaMn4O5] cluster site. Residues 345 to 353 constitute a propeptide that is removed on maturation; sequence AVEAPSTNG.

Belongs to the reaction center PufL/M/PsbA/D family. In terms of assembly, PSII is composed of 1 copy each of membrane proteins PsbA, PsbB, PsbC, PsbD, PsbE, PsbF, PsbH, PsbI, PsbJ, PsbK, PsbL, PsbM, PsbT, PsbX, PsbY, PsbZ, Psb30/Ycf12, at least 3 peripheral proteins of the oxygen-evolving complex and a large number of cofactors. It forms dimeric complexes. It depends on The D1/D2 heterodimer binds P680, chlorophylls that are the primary electron donor of PSII, and subsequent electron acceptors. It shares a non-heme iron and each subunit binds pheophytin, quinone, additional chlorophylls, carotenoids and lipids. D1 provides most of the ligands for the Mn4-Ca-O5 cluster of the oxygen-evolving complex (OEC). There is also a Cl(-1) ion associated with D1 and D2, which is required for oxygen evolution. The PSII complex binds additional chlorophylls, carotenoids and specific lipids. as a cofactor. In terms of processing, tyr-161 forms a radical intermediate that is referred to as redox-active TyrZ, YZ or Y-Z. C-terminally processed by CTPA; processing is essential to allow assembly of the oxygen-evolving complex and thus photosynthetic growth.

Its subcellular location is the plastid. It localises to the chloroplast thylakoid membrane. The catalysed reaction is 2 a plastoquinone + 4 hnu + 2 H2O = 2 a plastoquinol + O2. Functionally, photosystem II (PSII) is a light-driven water:plastoquinone oxidoreductase that uses light energy to abstract electrons from H(2)O, generating O(2) and a proton gradient subsequently used for ATP formation. It consists of a core antenna complex that captures photons, and an electron transfer chain that converts photonic excitation into a charge separation. The D1/D2 (PsbA/PsbD) reaction center heterodimer binds P680, the primary electron donor of PSII as well as several subsequent electron acceptors. The chain is Photosystem II protein D1 from Oenothera parviflora (Small-flowered evening primrose).